We begin with the raw amino-acid sequence, 203 residues long: GTP-binding protein yptV1 (203 aa).

GTP is bound by residues 15–23 (GDSGVGKSC), 33–40 (YTESYIST), 63–67 (DTAGQ), 121–124 (NKSD), and 151–153 (SAK). The short motif at 37 to 45 (YISTIGVDF) is the Effector region element. The interval 173-203 (MASQPVPPKPGGPVVRPTEGKPINNKSSSCC) is disordered. Residues C202 and C203 are each lipidated (S-geranylgeranyl cysteine).

It belongs to the small GTPase superfamily. Rab family.

It is found in the cell membrane. Protein transport. Probably involved in vesicular traffic. This is GTP-binding protein yptV1 (YPTV1) from Volvox carteri (Green alga).